A 246-amino-acid polypeptide reads, in one-letter code: 1-(5-phosphoribosyl)-5-[(5-phosphoribosylamino)methylideneamino] imidazole-4-carboxamide isomerase (246 aa).

Catalysis depends on D10, which acts as the Proton acceptor. The active-site Proton donor is the D135.

The protein belongs to the HisA/HisF family.

The protein localises to the cytoplasm. It catalyses the reaction 1-(5-phospho-beta-D-ribosyl)-5-[(5-phospho-beta-D-ribosylamino)methylideneamino]imidazole-4-carboxamide = 5-[(5-phospho-1-deoxy-D-ribulos-1-ylimino)methylamino]-1-(5-phospho-beta-D-ribosyl)imidazole-4-carboxamide. The protein operates within amino-acid biosynthesis; L-histidine biosynthesis; L-histidine from 5-phospho-alpha-D-ribose 1-diphosphate: step 4/9. The polypeptide is 1-(5-phosphoribosyl)-5-[(5-phosphoribosylamino)methylideneamino] imidazole-4-carboxamide isomerase (Methanococcoides burtonii (strain DSM 6242 / NBRC 107633 / OCM 468 / ACE-M)).